Consider the following 262-residue polypeptide: Small ribosomal subunit protein uS2 (262 aa).

The segment at 228–262 (VSNEEVAAEQNINLDDKEESEQAETTEENTSVESN) is disordered. Positions 243–254 (DKEESEQAETTE) are enriched in acidic residues.

It belongs to the universal ribosomal protein uS2 family.

The sequence is that of Small ribosomal subunit protein uS2 from Staphylococcus epidermidis (strain ATCC 35984 / DSM 28319 / BCRC 17069 / CCUG 31568 / BM 3577 / RP62A).